The chain runs to 243 residues: 7-cyano-7-deazaguanine synthase (243 aa).

Residue 18–28 (FSGGQDSATCL) participates in ATP binding. Residues C206, C221, C224, and C227 each contribute to the Zn(2+) site.

It belongs to the QueC family. Requires Zn(2+) as cofactor.

The enzyme catalyses 7-carboxy-7-deazaguanine + NH4(+) + ATP = 7-cyano-7-deazaguanine + ADP + phosphate + H2O + H(+). The protein operates within purine metabolism; 7-cyano-7-deazaguanine biosynthesis. Catalyzes the ATP-dependent conversion of 7-carboxy-7-deazaguanine (CDG) to 7-cyano-7-deazaguanine (preQ(0)). The chain is 7-cyano-7-deazaguanine synthase from Maricaulis maris (strain MCS10) (Caulobacter maris).